A 556-amino-acid polypeptide reads, in one-letter code: 2-succinyl-5-enolpyruvyl-6-hydroxy-3-cyclohexene-1-carboxylate synthase (556 aa).

It belongs to the TPP enzyme family. MenD subfamily. Homodimer. The cofactor is Mg(2+). It depends on Mn(2+) as a cofactor. Thiamine diphosphate serves as cofactor.

It carries out the reaction isochorismate + 2-oxoglutarate + H(+) = 5-enolpyruvoyl-6-hydroxy-2-succinyl-cyclohex-3-ene-1-carboxylate + CO2. Its pathway is quinol/quinone metabolism; 1,4-dihydroxy-2-naphthoate biosynthesis; 1,4-dihydroxy-2-naphthoate from chorismate: step 2/7. It functions in the pathway quinol/quinone metabolism; menaquinone biosynthesis. Its function is as follows. Catalyzes the thiamine diphosphate-dependent decarboxylation of 2-oxoglutarate and the subsequent addition of the resulting succinic semialdehyde-thiamine pyrophosphate anion to isochorismate to yield 2-succinyl-5-enolpyruvyl-6-hydroxy-3-cyclohexene-1-carboxylate (SEPHCHC). The sequence is that of 2-succinyl-5-enolpyruvyl-6-hydroxy-3-cyclohexene-1-carboxylate synthase from Salmonella gallinarum (strain 287/91 / NCTC 13346).